A 2567-amino-acid chain; its full sequence is Unconventional myosin-XVIIIb (2567 aa).

Residues 41–508 (LVRGTEKEAK…SRDSDQAPED (468 aa)) are disordered. Residues 44–54 (GTEKEAKEARQ) are compositionally biased toward basic and acidic residues. Over residues 71-104 (SISQPNSKSSSGTRSGSQQISQDDQSSSPGSSDI) the composition is skewed to low complexity. Composition is skewed to basic and acidic residues over residues 105 to 116 (LGKESEGSRSPD) and 160 to 176 (LDPD…HDAP). Polar residues predominate over residues 196–206 (SRTPCGSQAST). 3 stretches are compositionally biased toward basic and acidic residues: residues 251 to 265 (TELK…DRQG), 278 to 287 (RPGKAEKEGA), and 326 to 349 (SKWD…EKTG). Residues 350 to 362 (EPQTQMEKTSQVQ) show a composition bias toward polar residues. 4 stretches are compositionally biased toward basic and acidic residues: residues 367–377 (DDLRMGEKAGE), 410–420 (SQTEKGCEAPK), 471–485 (LEKD…KENQ), and 492–508 (EEGK…APED). Residues 571-1333 (DQVEDLASLI…VISRLEKQRE (763 aa)) form the Myosin motor domain. ATP is bound at residue 660 to 667 (GWSGAGKT). A disordered region spans residues 1208-1232 (VESRSGQESPPPPQPGRDKPGAGGP). Residues 1213-1240 (GQESPPPPQPGRDKPGAGGPLALDIPAL) form a GPA region. Position 1216 is a phosphoserine (S1216). In terms of domain architecture, IQ spans 1336 to 1365 (VSQSIVLFQAACKGFLSRQEFKKLKIRRLA). Coiled-coil stretches lie at residues 1396-1783 (SATI…GLIG), 1825-1961 (KTSV…STVD), and 2014-2090 (ESQQ…VASS). The tract at residues 1426–2083 (NELRQNTDLL…IRRIADLQAA (658 aa)) is tail. Position 1829 is a phosphoserine (S1829). A compositionally biased stretch (polar residues) spans 2139 to 2153 (TMRTPSRQSATSSRI). Disordered regions lie at residues 2139–2194 (TMRT…PVSP) and 2217–2249 (STER…PSAA). The segment covering 2158–2167 (INEEAGDTER) has biased composition (basic and acidic residues). Residues 2168–2185 (TQSALALSRARSTNVHSK) show a composition bias toward polar residues. Residue S2193 is modified to Phosphoserine. The span at 2227–2238 (PLASRSTNTSPL) shows a compositional bias: polar residues. Residues S2296 and S2309 each carry the phosphoserine modification. The tract at residues 2357 to 2376 (SRPSMGRKLSSPTTPRDMLL) is disordered. Phosphoserine is present on S2377. 2 disordered regions span residues 2444-2471 (FLPA…SQRS) and 2494-2567 (KSPE…YLQK). The segment covering 2494 to 2504 (KSPEPKEDPAH) has biased composition (basic and acidic residues). Over residues 2506-2520 (SDSSSSSGSIVSFKS) the composition is skewed to low complexity. Residues 2537-2556 (GGERTSPERREPGTGRKDDD) are compositionally biased toward basic and acidic residues.

The protein belongs to the TRAFAC class myosin-kinesin ATPase superfamily. Myosin family. As to quaternary structure, homodimer. May interact with F actin through the GPA motif (Gly/Pro/Ala-rich). As to expression, selectively expressed in cardiac and skeletal muscles. Weakly expressed in testis, pancreas, placenta, prostate, lung and thymus.

It is found in the cytoplasm. It localises to the nucleus. Its subcellular location is the myofibril. The protein localises to the sarcomere. May be involved in intracellular trafficking of the muscle cell when in the cytoplasm, whereas entering the nucleus, may be involved in the regulation of muscle specific genes. May play a role in the control of tumor development and progression; restored MYO18B expression in lung cancer cells suppresses anchorage-independent growth. The sequence is that of Unconventional myosin-XVIIIb (MYO18B) from Homo sapiens (Human).